Here is a 612-residue protein sequence, read N- to C-terminus: Pentatricopeptide repeat-containing protein At4g14050, mitochondrial (612 aa).

Residues 1–24 (MLIPHYLHQLQLCARNRTLTTAKA) constitute a mitochondrion transit peptide. 11 PPR repeats span residues 37–71 (CCPL…DHIA), 72–103 (WASV…GLRP), 104–138 (DDFV…EYAN), 139–169 (DEVV…IRVK), 170–204 (NTIS…NLYS), 205–235 (WTAL…RVDI), 237–271 (DPLV…GFDS), 272–302 (CVFI…MRHR), 303–337 (DVVS…GVKP), 338–373 (NEVT…GIRP), and 374–408 (SLQH…PDEP). The tract at residues 409-485 (TWAALLSACK…DPGHSSVEVR (77 aa)) is type E motif. Residues 486–516 (KETEVFYAGETSHPLKEDIFRLLKKLEEEMR) form a type E(+) motif region. A type DYW motif region spans residues 518–612 (RNGYVPDTSW…GGKCSCNDFW (95 aa)).

The protein belongs to the PPR family. PCMP-H subfamily. In terms of assembly, interacts with MORF8/RIP1 and MORF1/RIP8.

It is found in the mitochondrion. Functionally, involved in C-to-U editing of mitochondrial RNA. Required specifically for editing the mitochondrial NAD4, MT-CYB/COB and RPL16 transcripts. This Arabidopsis thaliana (Mouse-ear cress) protein is Pentatricopeptide repeat-containing protein At4g14050, mitochondrial (PCMP-H13).